Consider the following 887-residue polypeptide: DNA gyrase subunit A (887 aa).

Positions 35 to 501 (LPDVRDGLKP…GFEDLEDEDL (467 aa)) constitute a Topo IIA-type catalytic domain. The active-site O-(5'-phospho-DNA)-tyrosine intermediate is the Y123. Residues 528–534 (QNRGGRG) carry the GyrA-box motif. The segment at 811–865 (KEDAEDETNEDEQSTSTVSEDGTEQQREAVVNDETPGNAIHTEVIDSEENDEDGR) is disordered. The segment covering 813–823 (DAEDETNEDEQ) has biased composition (acidic residues).

This sequence belongs to the type II topoisomerase GyrA/ParC subunit family. In terms of assembly, heterotetramer, composed of two GyrA and two GyrB chains. In the heterotetramer, GyrA contains the active site tyrosine that forms a transient covalent intermediate with DNA, while GyrB binds cofactors and catalyzes ATP hydrolysis.

The protein resides in the cytoplasm. The enzyme catalyses ATP-dependent breakage, passage and rejoining of double-stranded DNA.. Functionally, a type II topoisomerase that negatively supercoils closed circular double-stranded (ds) DNA in an ATP-dependent manner to modulate DNA topology and maintain chromosomes in an underwound state. Negative supercoiling favors strand separation, and DNA replication, transcription, recombination and repair, all of which involve strand separation. Also able to catalyze the interconversion of other topological isomers of dsDNA rings, including catenanes and knotted rings. Type II topoisomerases break and join 2 DNA strands simultaneously in an ATP-dependent manner. The protein is DNA gyrase subunit A of Staphylococcus aureus (strain MSSA476).